Here is a 163-residue protein sequence, read N- to C-terminus: Bacterial ISG15-like ubiquitin-like protein BilA (163 aa).

2 Ubiquitin-like BIL-type domains span residues 4–80 (LVVF…RCKR) and 81–163 (IRAT…RIEG). A Glycyl lysine isopeptide (Gly-Lys) (interchain with K-? in central tail fiber acceptor protein) cross-link involves residue G163.

In terms of biological role, component of the Bil (bacterial ISG15-like) antiviral defense system, composed of BilA, BilB, BilC and BilD. The Bil system specifically conjugates a ubiquitin-like moiety (bilA) to the bacteriophage central tail fiber (CTF, or tip attachment protein J) via reactions involving E1 (bilD) and E2 (bilB). Modifies CTF of phage SECphi27 and SECphi4, which probably interferes with assembly of the phage tail. Also modifies T5 baseplate hub protein pb3 (gene D16), but not gp27 of phage T6 (Bil defends against T6). Bil-encoding bacteria produce mostly defective phage SECphi27, many of which have phage assembly defects, including no tails. SECphi27 phage progeny produced in E.coli with the Bil system inject less DNA into naive host cells, maybe because the phage are less able to adsorb and inject their DNA into host cells. Functionally, expression of the Bil system in E.coli (strain MG1655) confers about 100-fold resistance to phage SECphi27, SECphi18, SECphi6, SECphi4 and T5, but not to SECphi17. When cells expressing the Bil system are infected by phage SECphi27 at low multiplicity of infection (0.03 MOI) the culture survives, at 3.0 MOI the culture collapses at the same time as cells without the Bil system. In Collimonas sp. (strain OK412), this protein is Bacterial ISG15-like ubiquitin-like protein BilA.